A 157-amino-acid chain; its full sequence is Ribosome-binding factor A (157 aa).

Residues 126-157 (RARATAQYAGDADPYKHDDEPSDDFEDDSDEE) form a disordered region. Residues 145–157 (EPSDDFEDDSDEE) are compositionally biased toward acidic residues.

The protein belongs to the RbfA family. In terms of assembly, monomer. Binds 30S ribosomal subunits, but not 50S ribosomal subunits or 70S ribosomes.

It is found in the cytoplasm. In terms of biological role, one of several proteins that assist in the late maturation steps of the functional core of the 30S ribosomal subunit. Associates with free 30S ribosomal subunits (but not with 30S subunits that are part of 70S ribosomes or polysomes). Required for efficient processing of 16S rRNA. May interact with the 5'-terminal helix region of 16S rRNA. This Bifidobacterium longum (strain DJO10A) protein is Ribosome-binding factor A.